Reading from the N-terminus, the 1020-residue chain is UPF0182 protein jk1603 (1020 aa).

Pro residues predominate over residues 1 to 18; that stretch reads MSTPTPPSSGRPKQPFPS. The disordered stretch occupies residues 1–23; the sequence is MSTPTPPSSGRPKQPFPSSPGSS. 7 helical membrane-spanning segments follow: residues 28–48, 73–93, 125–145, 175–195, 227–247, 272–292, and 300–320; these read ILGI…VVVS, LVLF…AAFL, FLVG…QSNW, LPFL…AFVI, LAVI…FDRY, QIVL…TIVL, and LAVA…PAML. The disordered stretch occupies residues 924-998; sequence QEIDGSVVDP…KVNKTRESGT (75 aa). Composition is skewed to basic and acidic residues over residues 942–961 and 969–998; these read KGDK…EQSS and KSDD…ESGT.

The protein belongs to the UPF0182 family.

Its subcellular location is the cell membrane. The protein is UPF0182 protein jk1603 of Corynebacterium jeikeium (strain K411).